A 113-amino-acid polypeptide reads, in one-letter code: Large ribosomal subunit protein uL22 (113 aa).

Belongs to the universal ribosomal protein uL22 family. In terms of assembly, part of the 50S ribosomal subunit.

In terms of biological role, this protein binds specifically to 23S rRNA; its binding is stimulated by other ribosomal proteins, e.g. L4, L17, and L20. It is important during the early stages of 50S assembly. It makes multiple contacts with different domains of the 23S rRNA in the assembled 50S subunit and ribosome. Functionally, the globular domain of the protein is located near the polypeptide exit tunnel on the outside of the subunit, while an extended beta-hairpin is found that lines the wall of the exit tunnel in the center of the 70S ribosome. The protein is Large ribosomal subunit protein uL22 of Stenotrophomonas maltophilia (strain K279a).